The primary structure comprises 451 residues: Phosphoglucosamine mutase (451 aa).

Ser-102 serves as the catalytic Phosphoserine intermediate. Ser-102, Asp-243, Asp-245, and Asp-247 together coordinate Mg(2+). Ser-102 is subject to Phosphoserine.

It belongs to the phosphohexose mutase family. It depends on Mg(2+) as a cofactor. Activated by phosphorylation.

It carries out the reaction alpha-D-glucosamine 1-phosphate = D-glucosamine 6-phosphate. Functionally, catalyzes the conversion of glucosamine-6-phosphate to glucosamine-1-phosphate. The polypeptide is Phosphoglucosamine mutase (Salinispora tropica (strain ATCC BAA-916 / DSM 44818 / JCM 13857 / NBRC 105044 / CNB-440)).